The chain runs to 421 residues: Imidazolonepropionase (421 aa).

Histidine 81 and histidine 83 together coordinate Fe(3+). Zn(2+) contacts are provided by histidine 81 and histidine 83. 4-imidazolone-5-propanoate contacts are provided by arginine 90, tyrosine 153, and histidine 186. Tyrosine 153 serves as a coordination point for N-formimidoyl-L-glutamate. Fe(3+) is bound at residue histidine 251. Histidine 251 provides a ligand contact to Zn(2+). Glutamate 254 provides a ligand contact to 4-imidazolone-5-propanoate. Residue aspartate 326 coordinates Fe(3+). Aspartate 326 lines the Zn(2+) pocket. Residues asparagine 328 and glycine 330 each coordinate N-formimidoyl-L-glutamate. Serine 331 serves as a coordination point for 4-imidazolone-5-propanoate.

The protein belongs to the metallo-dependent hydrolases superfamily. HutI family. Zn(2+) is required as a cofactor. Fe(3+) serves as cofactor.

It localises to the cytoplasm. The catalysed reaction is 4-imidazolone-5-propanoate + H2O = N-formimidoyl-L-glutamate. The protein operates within amino-acid degradation; L-histidine degradation into L-glutamate; N-formimidoyl-L-glutamate from L-histidine: step 3/3. In terms of biological role, catalyzes the hydrolytic cleavage of the carbon-nitrogen bond in imidazolone-5-propanoate to yield N-formimidoyl-L-glutamate. It is the third step in the universal histidine degradation pathway. This Streptococcus gordonii (strain Challis / ATCC 35105 / BCRC 15272 / CH1 / DL1 / V288) protein is Imidazolonepropionase.